Reading from the N-terminus, the 422-residue chain is L-2-hydroxyglutarate dehydrogenase (422 aa).

This sequence belongs to the L2HGDH family. FAD serves as cofactor.

The protein localises to the cell inner membrane. The catalysed reaction is (S)-2-hydroxyglutarate + a quinone = a quinol + 2-oxoglutarate. Its pathway is amino-acid degradation. Its function is as follows. Catalyzes the dehydrogenation of L-2-hydroxyglutarate (L2HG) to alpha-ketoglutarate and couples to the respiratory chain by feeding electrons from the reaction into the membrane quinone pool. Functions in a L-lysine degradation pathway that proceeds via cadaverine, glutarate and L-2-hydroxyglutarate. This Escherichia coli (strain K12) protein is L-2-hydroxyglutarate dehydrogenase.